The sequence spans 303 residues: Nitrogenase iron protein (303 aa).

11-18 (GKGGIGKS) is an ATP binding site. Cys-112 serves as a coordination point for [4Fe-4S] cluster. Arg-115 carries the post-translational modification ADP-ribosylarginine; by dinitrogenase reductase ADP-ribosyltransferase. Residue Cys-147 coordinates [4Fe-4S] cluster.

Belongs to the NifH/BchL/ChlL family. Homodimer. [4Fe-4S] cluster serves as cofactor. The reversible ADP-ribosylation of Arg-115 inactivates the nitrogenase reductase and regulates nitrogenase activity.

It carries out the reaction N2 + 8 reduced [2Fe-2S]-[ferredoxin] + 16 ATP + 16 H2O = H2 + 8 oxidized [2Fe-2S]-[ferredoxin] + 2 NH4(+) + 16 ADP + 16 phosphate + 6 H(+). The key enzymatic reactions in nitrogen fixation are catalyzed by the nitrogenase complex, which has 2 components: the iron protein and the molybdenum-iron protein. The chain is Nitrogenase iron protein from Wolinella succinogenes (strain ATCC 29543 / DSM 1740 / CCUG 13145 / JCM 31913 / LMG 7466 / NCTC 11488 / FDC 602W) (Vibrio succinogenes).